Consider the following 105-residue polypeptide: UPF0235 protein A1G_07140 (105 aa).

The protein belongs to the UPF0235 family.

This Rickettsia rickettsii (strain Sheila Smith) protein is UPF0235 protein A1G_07140.